Consider the following 468-residue polypeptide: ATP-dependent protease ATPase subunit HslU (468 aa).

ATP-binding positions include Val-22 and 64–69; that span reads GVGKTE. The segment at 166–187 is disordered; it reads FGNNDEEDEEPPTEDIKTKRSE. The span at 169–178 shows a compositional bias: acidic residues; the sequence is NDEEDEEPPT. ATP contacts are provided by Asp-281, Glu-346, and Arg-418.

This sequence belongs to the ClpX chaperone family. HslU subfamily. In terms of assembly, a double ring-shaped homohexamer of HslV is capped on each side by a ring-shaped HslU homohexamer. The assembly of the HslU/HslV complex is dependent on binding of ATP.

It localises to the cytoplasm. Functionally, ATPase subunit of a proteasome-like degradation complex; this subunit has chaperone activity. The binding of ATP and its subsequent hydrolysis by HslU are essential for unfolding of protein substrates subsequently hydrolyzed by HslV. HslU recognizes the N-terminal part of its protein substrates and unfolds these before they are guided to HslV for hydrolysis. The protein is ATP-dependent protease ATPase subunit HslU of Staphylococcus carnosus (strain TM300).